Here is a 356-residue protein sequence, read N- to C-terminus: Ferredoxin--NADP reductase (356 aa).

FAD is bound by residues Thr25, Glu44, Gln52, Tyr57, Val97, Phe132, Asp298, and Ser339.

Belongs to the ferredoxin--NADP reductase type 2 family. Homodimer. FAD serves as cofactor.

The enzyme catalyses 2 reduced [2Fe-2S]-[ferredoxin] + NADP(+) + H(+) = 2 oxidized [2Fe-2S]-[ferredoxin] + NADPH. In Chlorobaculum parvum (strain DSM 263 / NCIMB 8327) (Chlorobium vibrioforme subsp. thiosulfatophilum), this protein is Ferredoxin--NADP reductase.